A 436-amino-acid chain; its full sequence is Sarcosine reductase complex component B subunit beta (436 aa).

Residue Sec-350 is part of the active site. Sec-350 is a non-standard amino acid (selenocysteine).

The protein belongs to the GrdB/GrdF/GrdH family. In terms of assembly, heterotetramer of two alpha and two beta subunits. Component of the sarcosine reductase complex, together with components A and C. PB is substrate specific.

The catalysed reaction is acetyl phosphate + methylamine + [thioredoxin]-disulfide + H2O = sarcosine + [thioredoxin]-dithiol + phosphate + H(+). Functionally, in the first step of sarcosine reductase, the substrate is bound to component PB via a Schiff base intermediate. Then the PB-activated substrate is nucleophilically attacked by the selenol anion of component PA to transform it to a carboxymethylated selenoether and the respective amine. By action of component PC, acetyl phosphate is formed, leaving component PA in its oxidized state. Finally component PA becomes reduced by the thioredoxin system to start a new catalytic cycle of reductive deamination. In Peptoclostridium acidaminophilum (Eubacterium acidaminophilum), this protein is Sarcosine reductase complex component B subunit beta (grdF).